The sequence spans 238 residues: Pyridoxine 5'-phosphate synthase (238 aa).

Asparagine 7 contacts 3-amino-2-oxopropyl phosphate. Residue 9 to 10 coordinates 1-deoxy-D-xylulose 5-phosphate; that stretch reads DH. Arginine 18 serves as a coordination point for 3-amino-2-oxopropyl phosphate. Histidine 43 acts as the Proton acceptor in catalysis. The 1-deoxy-D-xylulose 5-phosphate site is built by arginine 45 and histidine 50. The Proton acceptor role is filled by glutamate 70. Threonine 100 is a 1-deoxy-D-xylulose 5-phosphate binding site. The active-site Proton donor is histidine 191. 3-amino-2-oxopropyl phosphate is bound by residues glycine 192 and 213–214; that span reads GH.

Belongs to the PNP synthase family. As to quaternary structure, homooctamer; tetramer of dimers.

It localises to the cytoplasm. It catalyses the reaction 3-amino-2-oxopropyl phosphate + 1-deoxy-D-xylulose 5-phosphate = pyridoxine 5'-phosphate + phosphate + 2 H2O + H(+). The protein operates within cofactor biosynthesis; pyridoxine 5'-phosphate biosynthesis; pyridoxine 5'-phosphate from D-erythrose 4-phosphate: step 5/5. Its function is as follows. Catalyzes the complicated ring closure reaction between the two acyclic compounds 1-deoxy-D-xylulose-5-phosphate (DXP) and 3-amino-2-oxopropyl phosphate (1-amino-acetone-3-phosphate or AAP) to form pyridoxine 5'-phosphate (PNP) and inorganic phosphate. This is Pyridoxine 5'-phosphate synthase from Thermosynechococcus vestitus (strain NIES-2133 / IAM M-273 / BP-1).